The chain runs to 333 residues: Mitochondrial fission regulator 1 (333 aa).

The N-terminal 48 residues, 1–48, are a transit peptide targeting the mitochondrion; sequence MLGWIKRLIRMVFQQVGVSMQSVLWSRKPYGSSRSIVRKIGTNLSLIQ. S119 is subject to Phosphoserine. Residues 137-169 are a coiled coil; the sequence is NEEALQKICALENELAALRAQIAKIVTQQEQQN. Disordered regions lie at residues 177–198 and 288–315; these read STTF…PPPA and SDSQ…FGPH. The tract at residues 179–304 is necessary and sufficient to promote mitochondrial fission; sequence TFGTIPPHPP…EKGIPKSESE (126 aa). Over residues 184–198 the composition is skewed to pro residues; it reads PPHPPPPPPPLPPPA. Over residues 288–307 the composition is skewed to basic and acidic residues; that stretch reads SDSQDEVEKGIPKSESEATS.

The protein belongs to the MTFR1 family.

Its subcellular location is the mitochondrion. May play a role in mitochondrial aerobic respiration. May also regulate mitochondrial organization and fission. The polypeptide is Mitochondrial fission regulator 1 (MTFR1) (Homo sapiens (Human)).